Reading from the N-terminus, the 112-residue chain is Nitrogen regulatory protein P-II (112 aa).

O-UMP-tyrosine is present on Y51.

Belongs to the P(II) protein family. In terms of assembly, homotrimer.

In nitrogen-limiting conditions, when the ratio of Gln to 2-ketoglutarate decreases, P-II is uridylylated to P-II-UMP. P-II-UMP allows the deadenylation of glutamine synthetase (GS), thus activating the enzyme. Conversely, in nitrogen excess P-II is deuridylated and promotes the adenylation of GS. P-II indirectly controls the transcription of the GS gene (glnA). P-II prevents NR-II-catalyzed conversion of NR-I to NR-I-phosphate, the transcriptional activator of glnA. When P-II is uridylylated to P-II-UMP, these events are reversed. The chain is Nitrogen regulatory protein P-II (glnB) from Klebsiella oxytoca.